A 182-amino-acid polypeptide reads, in one-letter code: uncharacterized protein (182 aa).

4 helical membrane-spanning segments follow: residues 19–39 (LFGI…SIVS), 51–71 (IYLV…VVFI), 87–107 (IFTV…IELF), and 118–138 (CSPF…LAMC).

It localises to the membrane. This is an uncharacterized protein from Caenorhabditis elegans.